Consider the following 891-residue polypeptide: Valine--tRNA ligase (891 aa).

A 'HIGH' region motif is present at residues 43-53 (PFTSGTLHLGH). The 'KMSKS' region motif lies at 536–540 (KMSKS). An ATP-binding site is contributed by Lys539.

This sequence belongs to the class-I aminoacyl-tRNA synthetase family. ValS type 2 subfamily.

It is found in the cytoplasm. It carries out the reaction tRNA(Val) + L-valine + ATP = L-valyl-tRNA(Val) + AMP + diphosphate. Functionally, catalyzes the attachment of valine to tRNA(Val). As ValRS can inadvertently accommodate and process structurally similar amino acids such as threonine, to avoid such errors, it has a 'posttransfer' editing activity that hydrolyzes mischarged Thr-tRNA(Val) in a tRNA-dependent manner. This is Valine--tRNA ligase from Pyrococcus furiosus (strain ATCC 43587 / DSM 3638 / JCM 8422 / Vc1).